We begin with the raw amino-acid sequence, 99 residues long: NADH-ubiquinone oxidoreductase chain 4L (99 aa).

The next 3 membrane-spanning stretches (helical) occupy residues 4 to 24 (MFLM…VFVS), 29 to 49 (LLST…FLFF), and 63 to 83 (FFLT…VSMI).

The protein belongs to the complex I subunit 4L family.

The protein localises to the mitochondrion membrane. It carries out the reaction a ubiquinone + NADH + 5 H(+)(in) = a ubiquinol + NAD(+) + 4 H(+)(out). Functionally, core subunit of the mitochondrial membrane respiratory chain NADH dehydrogenase (Complex I) that is believed to belong to the minimal assembly required for catalysis. Complex I functions in the transfer of electrons from NADH to the respiratory chain. The immediate electron acceptor for the enzyme is believed to be ubiquinone. The chain is NADH-ubiquinone oxidoreductase chain 4L (mt:ND4L) from Anopheles gambiae (African malaria mosquito).